Consider the following 241-residue polypeptide: Orotidine 5'-phosphate decarboxylase (241 aa).

Residues Asp-19, Lys-41, Asp-69–Thr-78, Thr-124, Arg-185, Gln-194, Gly-214, and Arg-215 contribute to the substrate site. Lys-71 acts as the Proton donor in catalysis.

It belongs to the OMP decarboxylase family. Type 1 subfamily. In terms of assembly, homodimer.

It carries out the reaction orotidine 5'-phosphate + H(+) = UMP + CO2. The protein operates within pyrimidine metabolism; UMP biosynthesis via de novo pathway; UMP from orotate: step 2/2. Its function is as follows. Catalyzes the decarboxylation of orotidine 5'-monophosphate (OMP) to uridine 5'-monophosphate (UMP). The polypeptide is Orotidine 5'-phosphate decarboxylase (Stenotrophomonas maltophilia (strain K279a)).